The chain runs to 171 residues: UPF0690 protein C1orf52 homolog A (171 aa).

Disordered regions lie at residues 1 to 56 (MAAE…GPDE) and 126 to 171 (NVYQ…KRKV). A compositionally biased stretch (basic and acidic residues) spans 47–56 (EAKKLPGPDE). A compositionally biased stretch (acidic residues) spans 146–160 (EEEAQEDSPPSDDEQ).

This sequence belongs to the UPF0690 family.

The protein is UPF0690 protein C1orf52 homolog A of Xenopus laevis (African clawed frog).